A 322-amino-acid chain; its full sequence is Delta-aminolevulinic acid dehydratase (322 aa).

Zn(2+) contacts are provided by Cys-120, Cys-122, and Cys-130. Residue Lys-195 is the Schiff-base intermediate with substrate of the active site. Residues Arg-205 and Arg-217 each contribute to the 5-aminolevulinate site. Glu-233 is a Mg(2+) binding site. The active-site Schiff-base intermediate with substrate is the Lys-248. Residues Ser-274 and Tyr-312 each coordinate 5-aminolevulinate.

This sequence belongs to the ALAD family. As to quaternary structure, homooctamer. Requires Zn(2+) as cofactor.

The enzyme catalyses 2 5-aminolevulinate = porphobilinogen + 2 H2O + H(+). It functions in the pathway porphyrin-containing compound metabolism; protoporphyrin-IX biosynthesis; coproporphyrinogen-III from 5-aminolevulinate: step 1/4. Catalyzes an early step in the biosynthesis of tetrapyrroles. Binds two molecules of 5-aminolevulinate per subunit, each at a distinct site, and catalyzes their condensation to form porphobilinogen. In Archaeoglobus fulgidus (strain ATCC 49558 / DSM 4304 / JCM 9628 / NBRC 100126 / VC-16), this protein is Delta-aminolevulinic acid dehydratase (hemB).